The chain runs to 389 residues: Na(+)/H(+) antiporter NhaA 1 (389 aa).

Transmembrane regions (helical) follow at residues 12–32 (VLNEAFGGVLLIVCTLLALLV), 62–82 (FLLWINDGLISIFFFAIGLEL), 97–117 (IVLPFMAALGGILIPAMLFAL), 128–148 (GWAIPTATDTAFALAILMMCG), 157–177 (IFLLSLAIFDDVGAILIIAIF), 184–204 (IVAFVVAGLAILAMLILNLLG), 220–240 (ISVLKSGVHATLAGIVTAFFI), 260–280 (FWIAFIILPLFAFANAGVNLS), 282–302 (IDIGAIFSGVSIGIFLGLFVG), 331–351 (LYGVCILTGIGFTMSLFIDGL), and 365–385 (LAILIASFCSGIWGFIYLKFF).

The protein belongs to the NhaA Na(+)/H(+) (TC 2.A.33) antiporter family.

It localises to the cell inner membrane. It catalyses the reaction Na(+)(in) + 2 H(+)(out) = Na(+)(out) + 2 H(+)(in). Functionally, na(+)/H(+) antiporter that extrudes sodium in exchange for external protons. The protein is Na(+)/H(+) antiporter NhaA 1 of Campylobacter jejuni (strain RM1221).